A 393-amino-acid polypeptide reads, in one-letter code: Tryptophan synthase beta chain (393 aa).

The residue at position 86 (lysine 86) is an N6-(pyridoxal phosphate)lysine.

This sequence belongs to the TrpB family. As to quaternary structure, tetramer of two alpha and two beta chains. Pyridoxal 5'-phosphate is required as a cofactor.

It carries out the reaction (1S,2R)-1-C-(indol-3-yl)glycerol 3-phosphate + L-serine = D-glyceraldehyde 3-phosphate + L-tryptophan + H2O. Its pathway is amino-acid biosynthesis; L-tryptophan biosynthesis; L-tryptophan from chorismate: step 5/5. Its function is as follows. The beta subunit is responsible for the synthesis of L-tryptophan from indole and L-serine. The chain is Tryptophan synthase beta chain from Alteromonas mediterranea (strain DSM 17117 / CIP 110805 / LMG 28347 / Deep ecotype).